Reading from the N-terminus, the 294-residue chain is Diaminopimelate epimerase (294 aa).

Substrate-binding residues include N11 and N78. C87 functions as the Proton donor in the catalytic mechanism. Residues 88–89, N167, N203, and 221–222 each bind substrate; these read GN and ER. Catalysis depends on C230, which acts as the Proton acceptor. 231–232 contributes to the substrate binding site; that stretch reads GT.

Belongs to the diaminopimelate epimerase family. Homodimer.

It is found in the cytoplasm. The enzyme catalyses (2S,6S)-2,6-diaminopimelate = meso-2,6-diaminopimelate. Its pathway is amino-acid biosynthesis; L-lysine biosynthesis via DAP pathway; DL-2,6-diaminopimelate from LL-2,6-diaminopimelate: step 1/1. In terms of biological role, catalyzes the stereoinversion of LL-2,6-diaminopimelate (L,L-DAP) to meso-diaminopimelate (meso-DAP), a precursor of L-lysine and an essential component of the bacterial peptidoglycan. In Mycolicibacterium paratuberculosis (strain ATCC BAA-968 / K-10) (Mycobacterium paratuberculosis), this protein is Diaminopimelate epimerase.